A 358-amino-acid chain; its full sequence is Vanillin synthase (358 aa).

A signal peptide spans 1–21 (MARLLLLLVGVLIACAAGARA). A propeptide spans 22-140 (GSEFLAEDNP…RGNHKLTSAI (119 aa)) (activation peptide). N-linked (GlcNAc...) asparagine glycosylation occurs at Asn125. 2 cysteine pairs are disulfide-bonded: Cys162–Cys205 and Cys196–Cys238. The active site involves Cys165. A glycan (N-linked (GlcNAc...) asparagine) is linked at Asn254. Cys296 and Cys346 are disulfide-bonded. Active-site residues include His305 and Asn325.

This sequence belongs to the peptidase C1 family.

It catalyses the reaction (E)-ferulate + H2O = vanillin + acetate. It carries out the reaction 4-O-beta-D-glucosyl-trans-ferulate + H2O = 4-O-beta-D-glucosyl-vanillin + acetate. It participates in aromatic compound metabolism; phenylpropanoid biosynthesis. Involved in the biosynthesis of vanillin and derivative natural products. Catalyzes the double carbon bond cleavage of ferulic acid to vanillin and of respective glucosides. This is Vanillin synthase from Glechoma hederacea (Ground-ivy).